Here is a 70-residue protein sequence, read N- to C-terminus: Cytochrome c oxidase subunit 8B, mitochondrial (70 aa).

Residues 1-24 (MLRLAPTVRLLQAPLRGWAVPKAH) constitute a mitochondrion transit peptide. The Mitochondrial matrix portion of the chain corresponds to 25 to 35 (ITAKPAKTPTS). A helical transmembrane segment spans residues 36 to 59 (PKEQAIGLSVTFLSFLLPAGWVLY). Topologically, residues 60-70 (HLDNYKKSSAA) are mitochondrial intermembrane.

It belongs to the cytochrome c oxidase VIII family. Component of the cytochrome c oxidase (complex IV, CIV), a multisubunit enzyme composed of 14 subunits. The complex is composed of a catalytic core of 3 subunits MT-CO1, MT-CO2 and MT-CO3, encoded in the mitochondrial DNA, and 11 supernumerary subunits COX4I1 (or COX4I2), COX5A, COX5B, COX6A2 (or COX6A1), COX6B1 (or COX6B2), COX6C, COX7A1 (or COX7A2), COX7B, COX7C, COX8B and NDUFA4, which are encoded in the nuclear genome. The complex exists as a monomer or a dimer and forms supercomplexes (SCs) in the inner mitochondrial membrane with NADH-ubiquinone oxidoreductase (complex I, CI) and ubiquinol-cytochrome c oxidoreductase (cytochrome b-c1 complex, complex III, CIII), resulting in different assemblies (supercomplex SCI(1)III(2)IV(1) and megacomplex MCI(2)III(2)IV(2)).

Its subcellular location is the mitochondrion inner membrane. The protein operates within energy metabolism; oxidative phosphorylation. In terms of biological role, component of the cytochrome c oxidase, the last enzyme in the mitochondrial electron transport chain which drives oxidative phosphorylation. The respiratory chain contains 3 multisubunit complexes succinate dehydrogenase (complex II, CII), ubiquinol-cytochrome c oxidoreductase (cytochrome b-c1 complex, complex III, CIII) and cytochrome c oxidase (complex IV, CIV), that cooperate to transfer electrons derived from NADH and succinate to molecular oxygen, creating an electrochemical gradient over the inner membrane that drives transmembrane transport and the ATP synthase. Cytochrome c oxidase is the component of the respiratory chain that catalyzes the reduction of oxygen to water. Electrons originating from reduced cytochrome c in the intermembrane space (IMS) are transferred via the dinuclear copper A center (CU(A)) of subunit 2 and heme A of subunit 1 to the active site in subunit 1, a binuclear center (BNC) formed by heme A3 and copper B (CU(B)). The BNC reduces molecular oxygen to 2 water molecules using 4 electrons from cytochrome c in the IMS and 4 protons from the mitochondrial matrix. The polypeptide is Cytochrome c oxidase subunit 8B, mitochondrial (COX8B) (Bos taurus (Bovine)).